Reading from the N-terminus, the 198-residue chain is Density-regulated protein (198 aa).

Ala-2 is subject to N-acetylalanine. A phosphoserine mark is found at Ser-20 and Ser-73. A disordered region spans residues 72-110 (NSPKQEAGISEGQGTAGEEEEKKKQKRGGRGQIKQKKKT). Thr-86 is modified (phosphothreonine). Residues 95 to 110 (KQKRGGRGQIKQKKKT) show a composition bias toward basic residues. One can recognise an SUI1 domain in the interval 115–182 (VTIAKIPRAK…DIIDVIQEKW (68 aa)). Ser-189 carries the post-translational modification Phosphoserine.

It belongs to the DENR family. Interacts with MCTS1 (via PUA domain); the complex regulates translation reinitiation. Highly expressed in heart and skeletal muscle and moderately expressed in the brain, placenta, liver and pancreas. Weakly expressed in the lung and kidney.

It is found in the cytoplasm. Translation regulator forming a complex with MCTS1 to promote translation reinitiation. Translation reinitiation is the process where the small ribosomal subunit remains attached to the mRNA following termination of translation of a regulatory upstream ORF (uORF), and resume scanning on the same mRNA molecule to initiate translation of a downstream ORF, usually the main ORF (mORF). The MCTS1/DENR complex is pivotal to two linked mechanisms essential for translation reinitiation. Firstly, the dissociation of deacylated tRNAs from post-termination 40S ribosomal complexes during ribosome recycling. Secondly, the recruitment in an EIF2-independent manner of aminoacylated initiator tRNA to P site of 40S ribosomes for a new round of translation. This regulatory mechanism governs the translation of more than 150 genes which translation reinitiation is MCTS1/DENR complex-dependent. This Homo sapiens (Human) protein is Density-regulated protein (DENR).